The primary structure comprises 256 residues: Fibroblast growth factor 3 (256 aa).

The N-terminal stretch at Met1 to Glu18 is a signal peptide. Disordered regions lie at residues Ala31 to Tyr54, Arg151 to Arg176, and Leu219 to Ile256. Over residues Glu238 to Ile256 the composition is skewed to basic residues.

It belongs to the heparin-binding growth factors family.

The protein localises to the secreted. In terms of biological role, plays an important role in the regulation of embryonic development, cell proliferation, and cell differentiation. This chain is Fibroblast growth factor 3 (fgf3), found in Danio rerio (Zebrafish).